Here is a 359-residue protein sequence, read N- to C-terminus: N6-succino-2-amino-2'-deoxyadenylate synthase (359 aa).

Ser23 acts as the Proton acceptor in catalysis. 5 residues coordinate ATP: Ser23, Thr24, Gly25, Lys26, and Gly27. Residue Ser23 participates in dGMP binding. Ser23 contributes to the Mg(2+) binding site. Asn49 provides a ligand contact to dGMP. Residues Gly51, His52, and Thr53 each coordinate ATP. Gly51 lines the Mg(2+) pocket. Positions 131, 132, and 146 each coordinate dGMP. Gln190 contacts ATP. Thr205 is a binding site for dGMP. Mg(2+) is bound at residue Thr274. Thr274, Val275, and Arg280 together coordinate L-aspartate. Asn305 and Gln308 together coordinate ATP.

This sequence belongs to the Caudovirales PurZ family. Requires Mg(2+) as cofactor.

The catalysed reaction is dGMP + L-aspartate + ATP = (2S)-2-amino-2'-deoxyadenylo-succinate + ADP + phosphate + 2 H(+). The protein operates within purine metabolism. Functionally, involved in the synthesis of the atypical nucleotide dZTP (2-amino-2'-deoxyadenosine-5'-triphosphate). Catalyzes the condensation of aspartate with deoxyguanylate into dSMP (N6-succino-2-amino-2'-deoxyadenylate), which undergoes defumarylation and phosphorylation respectively by host PurB and guanylate/nucleoside diphosphate kinases to give dZTP. dZTP is integrated into the viral genome instead of adenine by the viral DNA polymerase. This Z-base probably completely replaces adenosine and forms a triple bond to the opposite T-base. The resulting non-standard viral DNA is called Z-genome. The chemically modified DNA is probably harder for the host bacteria to digest with nucleases or restriction enzymes. This Cyanophage S-2L (Cyanobacteria phage S-2L) protein is N6-succino-2-amino-2'-deoxyadenylate synthase.